The following is a 289-amino-acid chain: ATP synthase gamma chain (289 aa).

This sequence belongs to the ATPase gamma chain family. In terms of assembly, F-type ATPases have 2 components, CF(1) - the catalytic core - and CF(0) - the membrane proton channel. CF(1) has five subunits: alpha(3), beta(3), gamma(1), delta(1), epsilon(1). CF(0) has three main subunits: a, b and c.

It localises to the cell inner membrane. In terms of biological role, produces ATP from ADP in the presence of a proton gradient across the membrane. The gamma chain is believed to be important in regulating ATPase activity and the flow of protons through the CF(0) complex. The polypeptide is ATP synthase gamma chain (Histophilus somni (strain 2336) (Haemophilus somnus)).